Here is a 54-residue protein sequence, read N- to C-terminus: MLRYAIVFFIIALIAALFGFTGIAAGAVEIAKIMFFIFVLLALVSLVMGFTRRK.

Transmembrane regions (helical) follow at residues 5 to 25 (AIVFFIIALIAALFGFTGIAA) and 30 to 50 (IAKIMFFIFVLLALVSLVMGF).

Belongs to the UPF0391 family.

Its subcellular location is the cell membrane. This Dechloromonas aromatica (strain RCB) protein is UPF0391 membrane protein Daro_2080.